The sequence spans 135 residues: Protein E6 (135 aa).

2 zinc fingers span residues 11-47 and 83-119; these read CIWC…CTSC and CMYC…CYLC.

It belongs to the papillomaviridae E6 protein family. Forms homodimers. Interacts with ubiquitin-protein ligase UBE3A/E6-AP; this interaction stimulates UBE3A ubiquitin activity. Interacts with host BAK1.

The protein localises to the host cytoplasm. Its subcellular location is the host nucleus. Functionally, plays a major role in the induction and maintenance of cellular transformation. E6 associates with host UBE3A/E6-AP ubiquitin-protein ligase and modulates its activity. Protects host keratinocytes from apoptosis by mediating the degradation of host BAK1. May also inhibit host immune response. The chain is Protein E6 from Cervus elaphus (Red deer).